The chain runs to 174 residues: Isomerase prhC (174 aa).

This sequence belongs to the trt14 isomerase family. As to quaternary structure, homodimer.

The protein operates within secondary metabolite biosynthesis; terpenoid biosynthesis. Isomerase; part of the gene cluster that mediates the biosynthesis of paraherquonin, a meroterpenoid with a unique, highly congested hexacyclic molecular architecture. The first step of the pathway is the synthesis of 3,5-dimethylorsellinic acid (DMOA) by the polyketide synthase prhL. Synthesis of DMOA is followed by farnesylation by the prenyltransferase prhE, methylesterification by the methyl-transferase prhM, epoxidation of the prenyl chain by the flavin-dependent monooxygenase prhF, and cyclization of the farnesyl moiety by the terpene cyclase prhH, to yield the tetracyclic intermediate, protoaustinoid A. The short chain dehydrogenase prhI then oxidizes the C-3 alcohol group of the terpene cyclase product to transform protoaustinoid A into protoaustinoid B. The FAD-binding monooxygenase prhJ catalyzes the oxidation of protoaustinoid B into preaustinoid A which is further oxidized into preaustinoid A1 by FAD-binding monooxygenase phrK. Finally, prhA leads to berkeleydione via the berkeleyone B intermediate. PrhA is a multifunctional dioxygenase that first desaturates at C5-C6 to form berkeleyone B, followed by rearrangement of the A/B-ring to form the cycloheptadiene moiety in berkeleydione. Berkeleydione serves as the key intermediate for the biosynthesis of paraherquonin as well as many other meroterpenoids. The cytochrome P450 monooxygenases prhB, prhD, and prhN, as well as the isomerase prhC, are probably involved in the late stage of paraherquonin biosynthesis, after the production of berkeleydione. Especially prhC might be a multifunctional enzyme that catalyzes the D-ring expansion via intramolecular methoxy rearrangement, as well as the hydrolysis of the expanded D-ring. This Penicillium brasilianum protein is Isomerase prhC.